A 338-amino-acid chain; its full sequence is Nicotinate-nucleotide--dimethylbenzimidazole phosphoribosyltransferase (338 aa).

The active-site Proton acceptor is Glu-305.

This sequence belongs to the CobT family.

It carries out the reaction 5,6-dimethylbenzimidazole + nicotinate beta-D-ribonucleotide = alpha-ribazole 5'-phosphate + nicotinate + H(+). It participates in nucleoside biosynthesis; alpha-ribazole biosynthesis; alpha-ribazole from 5,6-dimethylbenzimidazole: step 1/2. Functionally, catalyzes the synthesis of alpha-ribazole-5'-phosphate from nicotinate mononucleotide (NAMN) and 5,6-dimethylbenzimidazole (DMB). The protein is Nicotinate-nucleotide--dimethylbenzimidazole phosphoribosyltransferase of Rhizobium rhizogenes (strain K84 / ATCC BAA-868) (Agrobacterium radiobacter).